A 625-amino-acid polypeptide reads, in one-letter code: tRNA uridine 5-carboxymethylaminomethyl modification enzyme MnmG (625 aa).

Residues 13 to 18 (GGGHAG), valine 125, and serine 182 contribute to the FAD site. NAD(+) is bound at residue 276–290 (GPRYCPSIEDKITRF). Glutamine 373 serves as a coordination point for FAD.

Belongs to the MnmG family. Homodimer. Heterotetramer of two MnmE and two MnmG subunits. The cofactor is FAD.

The protein localises to the cytoplasm. In terms of biological role, NAD-binding protein involved in the addition of a carboxymethylaminomethyl (cmnm) group at the wobble position (U34) of certain tRNAs, forming tRNA-cmnm(5)s(2)U34. This Lactococcus lactis subsp. cremoris (strain MG1363) protein is tRNA uridine 5-carboxymethylaminomethyl modification enzyme MnmG.